A 360-amino-acid chain; its full sequence is Heme A synthase (360 aa).

Helical transmembrane passes span 29–49, 111–131, 139–159, 175–195, 210–230, 269–289, 309–329, and 330–350; these read WLFLMAALVVAMVAVGGATRL, FLGRLIGLCFFLPLGWFWWTG, LGLVGLGVLGGLQGAVGWIMV, LAAHLTLASAIFAGLVWLAAG, LTALLLPVATLLQIALGGLVA, VALVQLNHRLVAYALLALALL, ALAGLVAAQAMLGITTLLLAV, and PLWAGLAHQVTAMLVLGMAVA. His-276 is a heme binding site. His-337 is a heme binding site.

It belongs to the COX15/CtaA family. Type 2 subfamily. Interacts with CtaB. It depends on heme b as a cofactor.

It localises to the cell membrane. The enzyme catalyses Fe(II)-heme o + 2 A + H2O = Fe(II)-heme a + 2 AH2. It functions in the pathway porphyrin-containing compound metabolism; heme A biosynthesis; heme A from heme O: step 1/1. Catalyzes the conversion of heme O to heme A by two successive hydroxylations of the methyl group at C8. The first hydroxylation forms heme I, the second hydroxylation results in an unstable dihydroxymethyl group, which spontaneously dehydrates, resulting in the formyl group of heme A. This Methylobacterium sp. (strain 4-46) protein is Heme A synthase.